A 129-amino-acid polypeptide reads, in one-letter code: Glycine cleavage system H protein (129 aa).

Residues S23–K104 enclose the Lipoyl-binding domain. The residue at position 64 (K64) is an N6-lipoyllysine.

The protein belongs to the GcvH family. The glycine cleavage system is composed of four proteins: P, T, L and H. The cofactor is (R)-lipoate.

In terms of biological role, the glycine cleavage system catalyzes the degradation of glycine. The H protein shuttles the methylamine group of glycine from the P protein to the T protein. In Nitrosomonas europaea (strain ATCC 19718 / CIP 103999 / KCTC 2705 / NBRC 14298), this protein is Glycine cleavage system H protein.